Reading from the N-terminus, the 758-residue chain is Vitamin K-dependent gamma-carboxylase (758 aa).

The tract at residues 1–22 is disordered; the sequence is MAVSAGSARTSPSSDKVQKDKA. Alanine 2 carries the post-translational modification N-acetylalanine. At 2–60 the chain is on the cytoplasmic side; it reads AVSAGSARTSPSSDKVQKDKAELISGPRQDSRIGKLLGFEWTDLSSWRRLVTLLNRPTD. A helical transmembrane segment spans residues 61–81; that stretch reads PASLAVFRFLFGFLMVLDIPQ. The Lumenal segment spans residues 82-113; the sequence is ERGLSSLDRKYLDGLDVCRFPLLDALRPLPLD. The cysteines at positions 99 and 450 are disulfide-linked. The chain crosses the membrane as a helical span at residues 114-134; it reads WMYLVYTIMFLGALGMMLGLC. At 135–136 the chain is on the cytoplasmic side; the sequence is YR. A helical transmembrane segment spans residues 137–157; that stretch reads ISCVLFLLPYWYVFLLDKTSW. The Lumenal segment spans residues 158-292; sequence NNHSYLYGLL…VSYFHCMNSQ (135 aa). Lysine 218 serves as the catalytic Proton acceptor. A helical transmembrane segment spans residues 293–313; that stretch reads LFSIGMFSYVMLASSPLFCSP. The Cytoplasmic segment spans residues 314-361; it reads EWPRKLVSYCPRRLQQLLPLKAAPQPSVSCVYKRSRGKSGQKPGLRHQ. Residues 362 to 382 traverse the membrane as a helical segment; sequence LGAAFTLLYLLEQLFLPYSHF. Residues 383-758 lie on the Lumenal side of the membrane; that stretch reads LTQGYNNWTN…SNPDPVHSEF (376 aa). N-linked (GlcNAc...) asparagine glycosylation is found at asparagine 459 and asparagine 550. Residues 732-758 form a disordered region; it reads GELNPSNTDSSHSNPPESNPDPVHSEF. The span at 735–747 shows a compositional bias: polar residues; the sequence is NPSNTDSSHSNPP.

This sequence belongs to the vitamin K-dependent gamma-carboxylase family. As to quaternary structure, monomer. May interact with CALU.

Its subcellular location is the endoplasmic reticulum membrane. It carries out the reaction 4-carboxy-L-glutamyl-[protein] + 2,3-epoxyphylloquinone + H2O + H(+) = phylloquinol + L-glutamyl-[protein] + CO2 + O2. Its function is as follows. Mediates the vitamin K-dependent carboxylation of glutamate residues to calcium-binding gamma-carboxyglutamate (Gla) residues with the concomitant conversion of the reduced hydroquinone form of vitamin K to vitamin K epoxide. Catalyzes gamma-carboxylation of various proteins, such as blood coagulation factors (F2, F7, F9 and F10), osteocalcin (BGLAP) or matrix Gla protein (MGP). The chain is Vitamin K-dependent gamma-carboxylase (GGCX) from Homo sapiens (Human).